We begin with the raw amino-acid sequence, 898 residues long: Sodium/hydrogen exchanger 5 (898 aa).

Residues 1–48 are Cytoplasmic-facing; sequence MLSAALLLLPGLPLAGAGATEEPTQESGPLGEPPPGLALFRWQWHEVE. The chain crosses the membrane as a helical span at residues 49–69; it reads APYLVALWILVASLAKIVFHL. The Extracellular portion of the chain corresponds to 70–76; it reads SRKVTSL. The helical transmembrane segment at 77–97 threads the bilayer; sequence VPESCLLILLGLVLGGIVLAV. The Cytoplasmic portion of the chain corresponds to 98–106; it reads AKKAEYQLE. Residues 107-127 form a helical membrane-spanning segment; that stretch reads PGTFFLFLLPPIVLDSGYFMP. Residues 128–137 are Extracellular-facing; sequence SRLFFDNLGA. Residues 138–158 form a helical membrane-spanning segment; that stretch reads ILTYAVVGTLWNAFTTGVALW. The Cytoplasmic portion of the chain corresponds to 159-176; that stretch reads GLQQAGLVAPRVQAGLLD. A helical transmembrane segment spans residues 177 to 197; that stretch reads FLLFGSLISAVDPVAVLAVFE. Over 198-203 the chain is Extracellular; sequence EVHVNQ. Residues 204 to 224 traverse the membrane as a helical segment; sequence TLFIIIFGESLLNDAVTVVLY. The Cytoplasmic portion of the chain corresponds to 225–249; that stretch reads KVCNSFVEMGSANVQATDYLKGVAS. A helical membrane pass occupies residues 250-270; sequence LFVVSLGGAAVGLVFAFLLAL. At 271–279 the chain is on the extracellular side; sequence TTRFTKRVR. A helical transmembrane segment spans residues 280–300; that stretch reads IIEPLLVFLLAYAAYLTAEMA. Residues 301–334 are Cytoplasmic-facing; it reads SLSAILAVTMCGLGCKKYVEANISHKSRTAVKYT. Residues 335-355 traverse the membrane as a helical segment; that stretch reads MKTLASCAETVIFMLLGISAV. At 356-363 the chain is on the extracellular side; it reads DSSKWAWD. A helical transmembrane segment spans residues 364–384; that stretch reads SGLVLGTLFFILFFRALGVVL. Residues 385–401 lie on the Cytoplasmic side of the membrane; it reads QTWALNQFRLVPLDKID. A helical membrane pass occupies residues 402–422; sequence QVVMSYGGLRGAVAFALVILL. Over 423-431 the chain is Extracellular; the sequence is DRTKVPAKD. A helical transmembrane segment spans residues 432-452; sequence YFVATTIVVVFFTVIVQGLTI. The Cytoplasmic segment spans residues 453-898; it reads KPLVKWLRVK…CIQFNRGGRL (446 aa). Disordered stretches follow at residues 660–693 and 826–866; these read FTKSKPRPRKTSHKKKDGVANPEATNGKPPRDLG and EEPQ…PQQE. Residues 663–675 show a composition bias toward basic residues; sequence SKPRPRKTSHKKK. Residues 857–866 show a composition bias toward polar residues; that stretch reads ESSADIPQQE.

It belongs to the monovalent cation:proton antiporter 1 (CPA1) transporter (TC 2.A.36) family. In terms of assembly, interacts with CHP1 and CHP2. Interacts with ARRB2; facilitates the endocytosis of SLC9A5 from the plasma membrane. Interacts with RACK1; this interaction positively regulates SLC9A5 activity and promote SLC9A5 localization to focal adhesions. Interacts with SCAMP2; this interaction regulates SLC9A5 cell-surface targeting and SLC9A5 activity. Post-translationally, phosphorylated by PRKAA2; promotes its accumulation at the cell surface. Phosphorylated by CSNK2A1 in a manner favoring its beta-arrestin binding and endocytosis. In terms of tissue distribution, highest expression level is detected in brain. Expressed in hippocampal neurons (at protein level).

It localises to the cell membrane. Its subcellular location is the recycling endosome membrane. The protein resides in the cell projection. It is found in the dendritic spine membrane. The protein localises to the synaptic cell membrane. It localises to the cell junction. Its subcellular location is the focal adhesion. The enzyme catalyses Na(+)(in) + H(+)(out) = Na(+)(out) + H(+)(in). Its function is as follows. Plasma membrane Na(+)/H(+) antiporter. Mediates the electroneutral exchange of intracellular H(+) ions for extracellular Na(+) in 1:1 stoichiometry. Responsible for regulating intracellular pH homeostasis, in particular in neural tissues. Acts as a negative regulator of dendritic spine growth. Plays a role in postsynaptic remodeling and signaling. Can also contribute to organellar pH regulation, with consequences for receptor tyrosine kinase trafficking. In Mus musculus (Mouse), this protein is Sodium/hydrogen exchanger 5 (Slc9a5).